The sequence spans 273 residues: WIMGHIVNAIGQIDEFVNLGANSIETDVSFDSNANPEYTYHGIPCDCGRNCKKWENFNDFLKGLRSATTPGDSKYKEKLVLVVFDLKTGSLYDNQANDAGKKLAKNLLQRYWNNGNNGGRAYIVLSIPDLNHYPLIKGFTDTLKQEGHPELLDKLGYDFSGNDAIGDVANAYKKAGVSGHVWQSDDITNCLLRGLTRVREAVANRDSGKGYINKVYYWTVDKRASTRDALDAGVDGIMTNYPDVITDVLNEAAYKSKFRVATYDDNPWETFKK.

Residue H5 is part of the active site. Mg(2+)-binding residues include E25 and D27. The active-site Nucleophile is the H41. 2 disulfides stabilise this stretch: C45/C51 and C47/C190. D85 contributes to the Mg(2+) binding site.

Belongs to the arthropod phospholipase D family. Class II subfamily. Requires Mg(2+) as cofactor. As to expression, expressed by the venom gland.

The protein resides in the secreted. It catalyses the reaction an N-(acyl)-sphingosylphosphocholine = an N-(acyl)-sphingosyl-1,3-cyclic phosphate + choline. The catalysed reaction is an N-(acyl)-sphingosylphosphoethanolamine = an N-(acyl)-sphingosyl-1,3-cyclic phosphate + ethanolamine. The enzyme catalyses a 1-acyl-sn-glycero-3-phosphocholine = a 1-acyl-sn-glycero-2,3-cyclic phosphate + choline. It carries out the reaction a 1-acyl-sn-glycero-3-phosphoethanolamine = a 1-acyl-sn-glycero-2,3-cyclic phosphate + ethanolamine. Dermonecrotic toxins cleave the phosphodiester linkage between the phosphate and headgroup of certain phospholipids (sphingolipid and lysolipid substrates), forming an alcohol (often choline) and a cyclic phosphate. This toxin acts on sphingomyelin (SM). It may also act on ceramide phosphoethanolamine (CPE), lysophosphatidylcholine (LPC) and lysophosphatidylethanolamine (LPE), but not on lysophosphatidylserine (LPS), and lysophosphatidylglycerol (LPG). It acts by transphosphatidylation, releasing exclusively cyclic phosphate products as second products. Induces dermonecrosis, hemolysis, increased vascular permeability, edema, inflammatory response, and platelet aggregation. This chain is Dermonecrotic toxin LspaSicTox-alphaIA1iii, found in Loxosceles spadicea (Recluse spider).